We begin with the raw amino-acid sequence, 116 residues long: Somatostatin (116 aa).

The N-terminal stretch at 1-24 (MLSCRLQCALAALSIVLALGGVTG) is a signal peptide. Positions 25-88 (APSDPRLRQF…QDEMRLELQR (64 aa)) are excised as a propeptide. Ala43 bears the Alanine amide mark. The segment at 62–99 (QTENDALEPEDLSQAAEQDEMRLELQRSANSNPAMAPR) is disordered. An intrachain disulfide couples Cys105 to Cys116.

The protein belongs to the somatostatin family. Post-translationally, C-terminal amidation of the neuronostatin peptide is required for its biological activity, including for the regulation of mean arterial pressure. As to expression, expressed in the pancreas and the spleen (at protein level).

Its subcellular location is the secreted. Functionally, inhibits the secretion of pituitary hormones, including that of growth hormone/somatotropin (GH1), PRL, ACTH, luteinizing hormone (LH) and TSH. Also impairs ghrelin- and GnRH-stimulated secretion of GH1 and LH; the inhibition of ghrelin-stimulated secretion of GH1 can be further increased by neuronostatin. Its function is as follows. May enhance low-glucose-induced glucagon release by pancreatic alpha cells. This effect may be mediated by binding to GPR107 and PKA activation. May regulate cardiac contractile function. May compromise cardiomyocyte viability. In the central nervous system, may impair memory retention and may affect hippocampal excitability. May also have anxiolytic and anorexigenic effects. May play a role in arterial pressure regulation. May inhibit basal, but not ghrelin- or GnRH-stimulated secretion of GH1 or LH, but does not affect the release of other pituitary hormones, including PRL, ACTH, FSH or TSH. Potentiates inhibitory action of somatostatin on ghrelin-stimulated secretion of GH1, but not that on GnRH-stimulated secretion of LH. The sequence is that of Somatostatin (SST) from Sus scrofa (Pig).